The following is a 125-amino-acid chain: Small ribosomal subunit protein uS12c (125 aa).

The protein belongs to the universal ribosomal protein uS12 family. In terms of assembly, part of the 30S ribosomal subunit.

It localises to the plastid. It is found in the chloroplast. In terms of biological role, with S4 and S5 plays an important role in translational accuracy. Located at the interface of the 30S and 50S subunits. This chain is Small ribosomal subunit protein uS12c (rps12), found in Nephroselmis olivacea (Green alga).